The sequence spans 501 residues: Cell division control protein 24 (501 aa).

As to quaternary structure, interacts with dna2, pcn1 and rfc1.

It is found in the nucleus. The protein resides in the cytoplasm. In terms of biological role, has a role in the progression of DNA replication and in the maintenance of genomic integrity. Acts during S phase, after initiation, where it is essential for completion. This chain is Cell division control protein 24 (cdc24), found in Schizosaccharomyces pombe (strain 972 / ATCC 24843) (Fission yeast).